Here is a 234-residue protein sequence, read N- to C-terminus: Phosphoribosylaminoimidazole-succinocarboxamide synthase (234 aa).

It belongs to the SAICAR synthetase family.

It carries out the reaction 5-amino-1-(5-phospho-D-ribosyl)imidazole-4-carboxylate + L-aspartate + ATP = (2S)-2-[5-amino-1-(5-phospho-beta-D-ribosyl)imidazole-4-carboxamido]succinate + ADP + phosphate + 2 H(+). The protein operates within purine metabolism; IMP biosynthesis via de novo pathway; 5-amino-1-(5-phospho-D-ribosyl)imidazole-4-carboxamide from 5-amino-1-(5-phospho-D-ribosyl)imidazole-4-carboxylate: step 1/2. This chain is Phosphoribosylaminoimidazole-succinocarboxamide synthase, found in Staphylococcus epidermidis (strain ATCC 35984 / DSM 28319 / BCRC 17069 / CCUG 31568 / BM 3577 / RP62A).